Here is a 369-residue protein sequence, read N- to C-terminus: ERCC4 domain-containing protein EP364R (369 aa).

Positions 3–101 (FLVADHREHH…QLYFFVEGPA (99 aa)) constitute an ERCC4 domain. The interval 339–369 (PLHDVSDDASSDASSPTGHQTLSKEMSLNTA) is disordered. Residues 354-369 (PTGHQTLSKEMSLNTA) show a composition bias toward polar residues.

It belongs to the asfivirus EP364R family.

Its function is as follows. Plays a role in the inhibition of type I interferon signaling pathway. Mechanistically, specifically interacts with 2',3'-cGAMP and cleaves it via its phosphodiesterase activity. In turn, prevents 2',3'-cGAMP interaction with host ER-resident STING1 leading to inhibition of downstream signaling pathway and type I interferon production. This chain is ERCC4 domain-containing protein EP364R, found in African swine fever virus (isolate Tick/South Africa/Pretoriuskop Pr4/1996) (ASFV).